A 445-amino-acid chain; its full sequence is tRNA modification GTPase MnmE (445 aa).

Positions 20, 79, and 119 each coordinate (6S)-5-formyl-5,6,7,8-tetrahydrofolate. The TrmE-type G domain maps to 215-371; it reads GLKLAIVGPP…ILKNIENIAE (157 aa). Asn225 provides a ligand contact to K(+). GTP is bound by residues 225–230, 244–250, and 269–272; these read NTGKSS, SNIAGTT, and DTAG. Ser229 serves as a coordination point for Mg(2+). Positions 244, 246, and 249 each coordinate K(+). Residue Thr250 coordinates Mg(2+). Lys445 is a (6S)-5-formyl-5,6,7,8-tetrahydrofolate binding site.

Belongs to the TRAFAC class TrmE-Era-EngA-EngB-Septin-like GTPase superfamily. TrmE GTPase family. As to quaternary structure, homodimer. Heterotetramer of two MnmE and two MnmG subunits. K(+) is required as a cofactor.

It localises to the cytoplasm. Exhibits a very high intrinsic GTPase hydrolysis rate. Involved in the addition of a carboxymethylaminomethyl (cmnm) group at the wobble position (U34) of certain tRNAs, forming tRNA-cmnm(5)s(2)U34. This is tRNA modification GTPase MnmE from Rickettsia akari (strain Hartford).